The chain runs to 682 residues: DNA-directed RNA polymerase subunit beta' (682 aa).

Zn(2+) contacts are provided by C69, C71, C87, and C90. Mg(2+)-binding residues include D491, D493, and D495.

It belongs to the RNA polymerase beta' chain family. RpoC1 subfamily. In plastids the minimal PEP RNA polymerase catalytic core is composed of four subunits: alpha, beta, beta', and beta''. When a (nuclear-encoded) sigma factor is associated with the core the holoenzyme is formed, which can initiate transcription. The cofactor is Mg(2+). It depends on Zn(2+) as a cofactor.

Its subcellular location is the plastid. The protein localises to the chloroplast. The catalysed reaction is RNA(n) + a ribonucleoside 5'-triphosphate = RNA(n+1) + diphosphate. In terms of biological role, DNA-dependent RNA polymerase catalyzes the transcription of DNA into RNA using the four ribonucleoside triphosphates as substrates. This chain is DNA-directed RNA polymerase subunit beta', found in Lotus japonicus (Lotus corniculatus var. japonicus).